The chain runs to 274 residues: MSQIKPSRLSSSAEIRGARQLDVLQRHKLAEPQQDWLAEEVPVALVYNGISHVVMMATPKDLAAFALGFSLSEGIISSPQEIYAIEITPGCNGIEVNIELSSRRFAGLKERRRAMAGRTGCGVCGIEQLDDIFRPITPLPFTQAFNLEHLDTALAQLKQVQPVGQLTGCTHAAAWINPEGELLGGCEDVGRHVALDKLLGIRAKQPWQQGAVLVSSRASYEMVQKTAMCGAEILFAVSAATTLAVEVAERCNLTLVGFSKPGRATVYTHPQRIK.

Cys121 acts as the Cysteine persulfide intermediate in catalysis. A Mo-bis(molybdopterin guanine dinucleotide)-binding site is contributed by 258-263; it reads FSKPGR.

This sequence belongs to the FdhD family.

The protein resides in the cytoplasm. Its function is as follows. Required for formate dehydrogenase (FDH) activity. Acts as a sulfur carrier protein that transfers sulfur from IscS to the molybdenum cofactor prior to its insertion into FDH. The sequence is that of Sulfur carrier protein FdhD from Yersinia pseudotuberculosis serotype O:1b (strain IP 31758).